The sequence spans 439 residues: Maintenance of mitochondrial morphology protein 1 (439 aa).

Over 1 to 76 (MSQDLIETTA…NGNTWSFTQG (76 aa)) the chain is Lumenal. The chain crosses the membrane as a helical span at residues 77-97 (LVIGQVSVIFIIIVFVKFFVF). The Cytoplasmic segment spans residues 98–439 (ADSSSHIPTK…TPGEYVNSNI (342 aa)). Disordered regions lie at residues 125–145 (KHSN…SLDS), 309–336 (MNGY…DGGT), and 405–425 (REPV…GTSA). The SMP-LTD domain maps to 165–395 (ASESLDWFNV…EPRFQVVRLP (231 aa)). 2 stretches are compositionally biased toward low complexity: residues 315-326 (ENANGDGASSSN) and 410-424 (KKTT…NGTS).

It belongs to the MMM1 family. As to quaternary structure, homodimer. Component of the ER-mitochondria encounter structure (ERMES) or MDM complex, composed of MMM1, MDM10, MDM12 and MDM34. An MMM1 homodimer associates with one molecule of MDM12 on each side in a pairwise head-to-tail manner, and the SMP-LTD domains of MMM1 and MDM12 generate a continuous hydrophobic tunnel for phospholipid trafficking.

It is found in the endoplasmic reticulum membrane. Component of the ERMES/MDM complex, which serves as a molecular tether to connect the endoplasmic reticulum (ER) and mitochondria. Components of this complex are involved in the control of mitochondrial shape and protein biogenesis, and function in nonvesicular lipid trafficking between the ER and mitochondria. The MDM12-MMM1 subcomplex functions in the major beta-barrel assembly pathway that is responsible for biogenesis of all outer membrane beta-barrel proteins, and acts in a late step after the SAM complex. The MDM10-MDM12-MMM1 subcomplex further acts in the TOM40-specific pathway after the action of the MDM12-MMM1 complex. Essential for establishing and maintaining the structure of mitochondria and maintenance of mtDNA nucleoids. In Candida albicans (strain WO-1) (Yeast), this protein is Maintenance of mitochondrial morphology protein 1.